The following is a 560-amino-acid chain: Vacuolar protein 8 (560 aa).

G2 carries N-myristoyl glycine lipidation. C4 carries S-palmitoyl cysteine lipidation. ARM repeat units lie at residues 39–76 (NRAE…FAEI), 77–116 (TERD…NLAV), 118–157 (TDNK…NLAT), 159–198 (EENK…NMTH), 200–239 (DENR…NIAV), 243–282 (NRRK…NLAS), 284–323 (EKYQ…NISI), 325–365 (PQNE…NLAA), and 409–448 (DELK…NLSS).

Belongs to the beta-catenin family.

The protein localises to the vacuole membrane. Functions in both vacuole inheritance and protein targeting from the cytoplasm to vacuole. The sequence is that of Vacuolar protein 8 (VAC8) from Chaetomium globosum (strain ATCC 6205 / CBS 148.51 / DSM 1962 / NBRC 6347 / NRRL 1970) (Soil fungus).